We begin with the raw amino-acid sequence, 243 residues long: Ubiquinone/menaquinone biosynthesis C-methyltransferase UbiE (243 aa).

Residues Thr69, Asp90, and 116-117 each bind S-adenosyl-L-methionine; that span reads DA.

Belongs to the class I-like SAM-binding methyltransferase superfamily. MenG/UbiE family.

The catalysed reaction is a 2-demethylmenaquinol + S-adenosyl-L-methionine = a menaquinol + S-adenosyl-L-homocysteine + H(+). The enzyme catalyses a 2-methoxy-6-(all-trans-polyprenyl)benzene-1,4-diol + S-adenosyl-L-methionine = a 5-methoxy-2-methyl-3-(all-trans-polyprenyl)benzene-1,4-diol + S-adenosyl-L-homocysteine + H(+). Its pathway is quinol/quinone metabolism; menaquinone biosynthesis; menaquinol from 1,4-dihydroxy-2-naphthoate: step 2/2. The protein operates within cofactor biosynthesis; ubiquinone biosynthesis. Its function is as follows. Methyltransferase required for the conversion of demethylmenaquinol (DMKH2) to menaquinol (MKH2) and the conversion of 2-polyprenyl-6-methoxy-1,4-benzoquinol (DDMQH2) to 2-polyprenyl-3-methyl-6-methoxy-1,4-benzoquinol (DMQH2). This chain is Ubiquinone/menaquinone biosynthesis C-methyltransferase UbiE, found in Burkholderia vietnamiensis (strain G4 / LMG 22486) (Burkholderia cepacia (strain R1808)).